The chain runs to 258 residues: Hydroxyacylglutathione hydrolase (258 aa).

Positions 56, 58, 60, 61, 112, 132, and 170 each coordinate Zn(2+).

Belongs to the metallo-beta-lactamase superfamily. Glyoxalase II family. In terms of assembly, monomer. It depends on Zn(2+) as a cofactor.

The enzyme catalyses an S-(2-hydroxyacyl)glutathione + H2O = a 2-hydroxy carboxylate + glutathione + H(+). It functions in the pathway secondary metabolite metabolism; methylglyoxal degradation; (R)-lactate from methylglyoxal: step 2/2. Functionally, thiolesterase that catalyzes the hydrolysis of S-D-lactoyl-glutathione to form glutathione and D-lactic acid. The sequence is that of Hydroxyacylglutathione hydrolase from Pseudomonas aeruginosa (strain LESB58).